A 449-amino-acid polypeptide reads, in one-letter code: Intestinal acid phosphatase (449 aa).

The signal sequence occupies residues 1 to 19 (MVSAISIVAIFALEGFVTT). Residues 20–428 (YSDGTKDLVF…TDLNKSSSFA (409 aa)) are Extracellular-facing. The active-site Nucleophile is the His-36. Asp-321 acts as the Proton donor in catalysis. Residues 429–449 (TVSMLFIAAILAINNNFLGLF) form a helical membrane-spanning segment.

It belongs to the histidine acid phosphatase family. Homodimer. The N-terminus is blocked. In terms of tissue distribution, expressed in the intestine, specifically on the edge of the gut lumen, in the 14 posterior cells of the intestine.

It localises to the membrane. The enzyme catalyses a phosphate monoester + H2O = an alcohol + phosphate. Its function is as follows. Acid phosphatase required for normal growth and development. Specifically required for normal gut differentiation. The polypeptide is Intestinal acid phosphatase (Caenorhabditis elegans).